A 723-amino-acid chain; its full sequence is Transmembrane channel-like protein 7 (723 aa).

2 disordered regions span residues 1-28 and 51-71; these read MSES…LSLD and RRRT…KPTD. Over 1-168 the chain is Extracellular; sequence MSESSGSALQ…GIQSYFSFLR (168 aa). N24 carries N-linked (GlcNAc...) asparagine glycosylation. A glycan (N-linked (GlcNAc...) asparagine) is linked at N84. At S89 the chain carries Phosphoserine. The N-linked (GlcNAc...) asparagine glycan is linked to N96. The chain crosses the membrane as a helical span at residues 169-189; that stretch reads FLVLLNLVIFLIIFMLVLLPV. The Cytoplasmic portion of the chain corresponds to 190-219; that stretch reads LLTKYKITNSSFVLIPFKDMDKQCTVYPVS. Residues 220–240 traverse the membrane as a helical segment; it reads SSGLIYFYSYIIDLLSGTGFL. The Extracellular segment spans residues 241 to 263; sequence EETSLFYGHYTIDGVKFQNFTYD. N259 carries N-linked (GlcNAc...) asparagine glycosylation. The chain crosses the membrane as a helical span at residues 264 to 284; that stretch reads LPLAYLLSTIASLALSLLWIV. The Cytoplasmic portion of the chain corresponds to 285–362; sequence KRSVEGFKIN…EETIRIYSLR (78 aa). The helical transmembrane segment at 363–383 threads the bilayer; it reads LFLNCIVLAVLGACFYAIYVA. Topologically, residues 384–404 are extracellular; it reads TVFSQEHMKKEIDKMVFGENL. A helical transmembrane segment spans residues 405 to 425; the sequence is FILYLPSIVITLANFITPMIF. Over 426–494 the chain is Cytoplasmic; it reads AKIIRYEDYS…PCWETQVGQE (69 aa). A helical membrane pass occupies residues 495-515; the sequence is MYKLMIFDFIIILAVTLFVDF. At 516–555 the chain is on the extracellular side; it reads PRKLLVTYCSSCKLIQCWGQQEFAIPDNVLGIVYGQTICW. A helical membrane pass occupies residues 556 to 576; it reads IGAFFSPLLPAIATLKFIIIF. Topologically, residues 577–601 are cytoplasmic; that stretch reads YVKEWSLLYTCRPSPRPFRASNSNF. A helical membrane pass occupies residues 602–622; that stretch reads FFLLVLLIGLCLAIIPLTISI. Topologically, residues 623-665 are extracellular; the sequence is SRIPSSKACGPFTNFNTTWEVIPKTVSTFPSSLQSFIHGVTSE. N638 carries N-linked (GlcNAc...) asparagine glycosylation. The helical transmembrane segment at 666–686 threads the bilayer; sequence AFAVPFFMIICLIMFYFIALA. Residues 687 to 723 lie on the Cytoplasmic side of the membrane; sequence GAHKRVVIQLREQLSLESRDKCYLIQKLTEAQRDMRN.

Belongs to the TMC family. As to quaternary structure, interacts with PIEZO2; the interaction inhibits PIEZO2-conducted mechanically activated currents.

Its subcellular location is the membrane. In terms of biological role, acts as an inhibitory modulator of PIEZO2 mechanosensitive channel in dorsal root ganglion (DRG) neurons through physical interactions or interference with the interaction between PIEZO2 and the cytoskeleton. This is Transmembrane channel-like protein 7 from Homo sapiens (Human).